The following is a 252-amino-acid chain: RNA-binding protein 7 (252 aa).

An RRM domain is found at 9–86 (RTLFVGNLDP…RQLNIKFKTG (78 aa)). Composition is skewed to polar residues over residues 88–107 (SHIN…SPAN) and 119–137 (QMGS…PFSS). Disordered stretches follow at residues 88-137 (SHIN…PFSS) and 171-252 (QLRG…WKHF). Composition is skewed to basic and acidic residues over residues 211–230 (ERNR…DRSG) and 237–252 (PPDR…WKHF).

In terms of assembly, component of the nuclear exosome targeting (NEXT) complex composed of MTREX, ZCCHC8, and RBM7 that directs a subset of non-coding short-lived RNAs for exosomal degradation.

The protein resides in the nucleus. Its subcellular location is the nucleoplasm. RNA-binding subunit of the trimeric nuclear exosome targeting (NEXT) complex, a complex that functions as an RNA exosome cofactor that directs a subset of non-coding short-lived RNAs for exosomal degradation. NEXT is involved in surveillance and turnover of aberrant transcripts and non-coding RNAs. Binds preferentially polyuridine sequences and associates with newly synthesized RNAs, including pre-mRNAs and short-lived exosome substrates such as promoter upstream transcripts (PROMPTs), enhancer RNAs (eRNAs), and 3'-extended products from small nuclear RNAs (snRNAs). The chain is RNA-binding protein 7 from Danio rerio (Zebrafish).